The sequence spans 603 residues: Linalool synthase Tps-5031L19, chloroplastic (603 aa).

The transit peptide at 1–36 (MSSMRTYVAIMKKPSVEHVDNVDKKASKPSWRVSLS) directs the protein to the chloroplast. Arg-322, Asp-359, Asp-363, Arg-500, and Asp-503 together coordinate (2E)-geranyl diphosphate. Mg(2+) is bound by residues Asp-359 and Asp-363. Residues 359–363 (DDVYD) carry the DDXXD motif motif. Mg(2+) contacts are provided by Asp-503, Thr-507, and Glu-511.

This sequence belongs to the terpene synthase family. Tpsb subfamily. Monomer. The cofactor is Mg(2+). Mn(2+) is required as a cofactor.

It localises to the plastid. The protein localises to the chloroplast. It carries out the reaction (2E)-geranyl diphosphate + H2O = linalool + diphosphate. Its pathway is secondary metabolite biosynthesis; terpenoid biosynthesis. Functionally, monoterpene synthase (mono-TPS) involved in the biosynthesis of monoterpenes natural products. Catalyzes the conversion of (2E)-geranyl diphosphate (GPP) into linalool. The chain is Linalool synthase Tps-5031L19, chloroplastic from Perilla frutescens var. hirtella (Perilla citriodora).